The sequence spans 362 residues: Cobalt-precorrin-5B C(1)-methyltransferase (362 aa).

This sequence belongs to the CbiD family.

It carries out the reaction Co-precorrin-5B + S-adenosyl-L-methionine = Co-precorrin-6A + S-adenosyl-L-homocysteine. It functions in the pathway cofactor biosynthesis; adenosylcobalamin biosynthesis; cob(II)yrinate a,c-diamide from sirohydrochlorin (anaerobic route): step 6/10. In terms of biological role, catalyzes the methylation of C-1 in cobalt-precorrin-5B to form cobalt-precorrin-6A. In Burkholderia vietnamiensis (strain G4 / LMG 22486) (Burkholderia cepacia (strain R1808)), this protein is Cobalt-precorrin-5B C(1)-methyltransferase.